We begin with the raw amino-acid sequence, 449 residues long: BPI fold-containing family B member 6 (449 aa).

Residues methionine 1–alanine 18 form the signal peptide. An N-linked (GlcNAc...) asparagine glycan is attached at asparagine 115. Cysteine 138 and cysteine 172 are disulfide-bonded.

Belongs to the BPI/LBP/Plunc superfamily. BPI/LBP family.

The protein localises to the secreted. The protein is BPI fold-containing family B member 6 (Bpifb6) of Mus musculus (Mouse).